Consider the following 488-residue polypeptide: Glutamyl-tRNA(Gln) amidotransferase subunit A (488 aa).

Catalysis depends on charge relay system residues Lys77 and Ser152. Ser176 functions as the Acyl-ester intermediate in the catalytic mechanism.

It belongs to the amidase family. GatA subfamily. As to quaternary structure, heterotrimer of A, B and C subunits.

The enzyme catalyses L-glutamyl-tRNA(Gln) + L-glutamine + ATP + H2O = L-glutaminyl-tRNA(Gln) + L-glutamate + ADP + phosphate + H(+). Its function is as follows. Allows the formation of correctly charged Gln-tRNA(Gln) through the transamidation of misacylated Glu-tRNA(Gln) in organisms which lack glutaminyl-tRNA synthetase. The reaction takes place in the presence of glutamine and ATP through an activated gamma-phospho-Glu-tRNA(Gln). The polypeptide is Glutamyl-tRNA(Gln) amidotransferase subunit A (Streptococcus pyogenes serotype M6 (strain ATCC BAA-946 / MGAS10394)).